The primary structure comprises 453 residues: Transmembrane protein 135 (453 aa).

The next 5 membrane-spanning stretches (helical) occupy residues 68–88 (LLQS…FFCI), 96–116 (FYFW…AILI), 149–169 (PIRH…MFFF), 293–313 (FQLG…SCFL), and 326–346 (LVAG…TISM).

This sequence belongs to the TMEM135 family.

Its subcellular location is the mitochondrion membrane. It is found in the peroxisome membrane. In terms of biological role, involved in mitochondrial metabolism by regulating the balance between mitochondrial fusion and fission. May act as a regulator of mitochondrial fission that promotes DNM1L-dependent fission through activation of DNM1L. May be involved in peroxisome organization. The polypeptide is Transmembrane protein 135 (tmem135) (Xenopus laevis (African clawed frog)).